The primary structure comprises 100 residues: Urease subunit gamma (100 aa).

This sequence belongs to the urease gamma subunit family. In terms of assembly, heterotrimer of UreA (gamma), UreB (beta) and UreC (alpha) subunits. Three heterotrimers associate to form the active enzyme.

It is found in the cytoplasm. The enzyme catalyses urea + 2 H2O + H(+) = hydrogencarbonate + 2 NH4(+). It functions in the pathway nitrogen metabolism; urea degradation; CO(2) and NH(3) from urea (urease route): step 1/1. The sequence is that of Urease subunit gamma from Rhizobium etli (strain ATCC 51251 / DSM 11541 / JCM 21823 / NBRC 15573 / CFN 42).